The sequence spans 144 residues: MKTYSQKASEIQREWLVVDAQNQVLGRLATQIATLIRGKHKPTYTPSMDGGDFVIVVNAEKIRVTGDKANQKIYYRHSNFPGGLKRTAYKVMMQTHPERIIYFAVKGMLPRNRLSRHIIKKLKVYAGESHPHASQSPKVYAVKG.

Belongs to the universal ribosomal protein uL13 family. Part of the 50S ribosomal subunit.

Functionally, this protein is one of the early assembly proteins of the 50S ribosomal subunit, although it is not seen to bind rRNA by itself. It is important during the early stages of 50S assembly. The sequence is that of Large ribosomal subunit protein uL13 from Herpetosiphon aurantiacus (strain ATCC 23779 / DSM 785 / 114-95).